The sequence spans 82 residues: MDSITTAASVVAAGLAVGLGAIGPGIGQGTAAGGAVEGIARQPEAEGKIRGTLLLSFAFMESLTIYGLVVALVLLFANPFAG.

A run of 2 helical transmembrane segments spans residues 7 to 27 and 57 to 77; these read AASVVAAGLAVGLGAIGPGIG and FAFMESLTIYGLVVALVLLFA.

The protein belongs to the ATPase C chain family. F-type ATPases have 2 components, F(1) - the catalytic core - and F(0) - the membrane proton channel. F(1) has five subunits: alpha(3), beta(3), gamma(1), delta(1), epsilon(1). F(0) has four main subunits: a(1), b(1), b'(1) and c(10-14). The alpha and beta chains form an alternating ring which encloses part of the gamma chain. F(1) is attached to F(0) by a central stalk formed by the gamma and epsilon chains, while a peripheral stalk is formed by the delta, b and b' chains.

The protein localises to the cellular thylakoid membrane. Its function is as follows. F(1)F(0) ATP synthase produces ATP from ADP in the presence of a proton or sodium gradient. F-type ATPases consist of two structural domains, F(1) containing the extramembraneous catalytic core and F(0) containing the membrane proton channel, linked together by a central stalk and a peripheral stalk. During catalysis, ATP synthesis in the catalytic domain of F(1) is coupled via a rotary mechanism of the central stalk subunits to proton translocation. Functionally, key component of the F(0) channel; it plays a direct role in translocation across the membrane. A homomeric c-ring of between 10-14 subunits forms the central stalk rotor element with the F(1) delta and epsilon subunits. The sequence is that of ATP synthase subunit c from Prochlorococcus marinus (strain MIT 9303).